The following is a 158-amino-acid chain: Transcriptional regulator MraZ (158 aa).

2 SpoVT-AbrB domains span residues 7-57 (THQN…PTAA) and 86-129 (AYPV…EPAA). Residues 133 to 158 (RRAEARTRSRQLALPAQGRRQGGADA) form a disordered region.

It belongs to the MraZ family. In terms of assembly, forms oligomers.

The protein resides in the cytoplasm. It localises to the nucleoid. This Gluconacetobacter diazotrophicus (strain ATCC 49037 / DSM 5601 / CCUG 37298 / CIP 103539 / LMG 7603 / PAl5) protein is Transcriptional regulator MraZ.